A 176-amino-acid polypeptide reads, in one-letter code: MSAQKAPKWYPSEDVAALKKTRKAARPQKLRASLVPGTVLILLAGRFRGKRVVYLKHLEDNTLLISGPFKVNGVPLRRVNARYVIATSTKVSVEGVNVEKFNVEYFAKEKLTKKEKKEANLFPEQQNKEIKAERVEDQKVVDKALIAEIKKTPLLKQYLSASFSLKNGDKPHMLKF.

S2 is modified (N-acetylserine). S12 carries the phosphoserine modification. K128 participates in a covalent cross-link: Glycyl lysine isopeptide (Lys-Gly) (interchain with G-Cter in ubiquitin).

The protein belongs to the eukaryotic ribosomal protein eL6 family. As to quaternary structure, component of the large ribosomal subunit (LSU). Mature yeast ribosomes consist of a small (40S) and a large (60S) subunit. The 40S small subunit contains 1 molecule of ribosomal RNA (18S rRNA) and 33 different proteins (encoded by 57 genes). The large 60S subunit contains 3 rRNA molecules (25S, 5.8S and 5S rRNA) and 46 different proteins (encoded by 81 genes). Post-translationally, N-terminally acetylated by acetyltransferase NatA.

It localises to the cytoplasm. Its function is as follows. Component of the ribosome, a large ribonucleoprotein complex responsible for the synthesis of proteins in the cell. The small ribosomal subunit (SSU) binds messenger RNAs (mRNAs) and translates the encoded message by selecting cognate aminoacyl-transfer RNA (tRNA) molecules. The large subunit (LSU) contains the ribosomal catalytic site termed the peptidyl transferase center (PTC), which catalyzes the formation of peptide bonds, thereby polymerizing the amino acids delivered by tRNAs into a polypeptide chain. The nascent polypeptides leave the ribosome through a tunnel in the LSU and interact with protein factors that function in enzymatic processing, targeting, and the membrane insertion of nascent chains at the exit of the ribosomal tunnel. The chain is Large ribosomal subunit protein eL6A from Saccharomyces cerevisiae (strain ATCC 204508 / S288c) (Baker's yeast).